A 457-amino-acid chain; its full sequence is Cysteine desulfurase (457 aa).

Pyridoxal 5'-phosphate is bound by residues Ala127, Thr128, Gln235, Ser255, and His257. At Lys258 the chain carries N6-(pyridoxal phosphate)lysine. Thr295 serves as a coordination point for pyridoxal 5'-phosphate. Cys381 functions as the Cysteine persulfide intermediate in the catalytic mechanism. Cys381 lines the [2Fe-2S] cluster pocket. Cys381 serves as a coordination point for Zn(2+). Cys381 carries the cysteine persulfide modification.

It belongs to the class-V pyridoxal-phosphate-dependent aminotransferase family. NifS/IscS subfamily. In terms of assembly, homodimer. Component of the mitochondrial core iron-sulfur cluster (ISC) complex composed of NFS1, LYRM4, NDUFAB1, ISCU, FXN, and FDX2; this complex is a heterohexamer containing two copies of each monomer. Component of cyteine desulfurase complex composed of NFS1, LYRM4 and NDUFAB1; this complex contributes to the activation of cysteine desulfurase activity and NFS1 stabilization. Interacts (homodimer form) with ISCU (D-state); each monomer interacts with the C-terminal regions of each NFS1 monomer. Interacts with HSPA9. Interacts (via homodimer form) with FDX2. Interacts (via homodimer form) with FXN. Interacts with LYRM4. Component of a complex composed of FXN, NFS1, LYRM4 and ISCU. As to quaternary structure, monomer. Homodimer. Oligomer. Interacts with ISCU. Component of the cysteine desulfurase complex composed of NFS1 and LYRM4; this complex contributes to the activation of cysteine desulfurase activity. Interacts with MOCS3. Pyridoxal 5'-phosphate serves as cofactor. In terms of processing, N-gluconoylated. Post-translationally, cysteine persulfide intermediate is reduced by thiol-containing molecules like glutathione and L-cysteine. Persulfide reduction is a rate-limiting step of cysteine desulfurase catalytic cycle.

It localises to the mitochondrion. The protein resides in the cytoplasm. The protein localises to the nucleus. Its subcellular location is the cytoskeleton. It is found in the microtubule organizing center. It localises to the centrosome. The catalysed reaction is (sulfur carrier)-H + L-cysteine = (sulfur carrier)-SH + L-alanine. The enzyme catalyses L-cysteinyl-[cysteine desulfurase] + L-cysteine = S-sulfanyl-L-cysteinyl-[cysteine desulfurase] + L-alanine. With respect to regulation, active only in complex with LYRM4. Cysteine desulfurase, of the core iron-sulfur cluster (ISC) assembly complex, that catalyzes the desulfuration of L-cysteine to L-alanine, as component of the cysteine desulfurase complex leading to the formation of a cysteine persulfide intermediate at the active site cysteine residue and participates in the [2Fe-2S] clusters assembly on the scaffolding protein ISCU. The persulfide is then transferred on the flexible Cys loop from the catalytic site of NFS1 to the surface of NFS1. After the NFS1-linked persulfide sulfur is transferred to one of the conserved Cys residues of the scaffold, a reaction assisted by FXN. The core iron-sulfur cluster (ISC) assembly complex is involved in the de novo synthesis of a [2Fe-2S] cluster, the first step of the mitochondrial iron-sulfur protein biogenesis. This process is initiated by the cysteine desulfurase complex (NFS1:LYRM4:NDUFAB1) that produces persulfide which is delivered on the scaffold protein ISCU in a FXN-dependent manner. Then this complex is stabilized by FDX2 which provides reducing equivalents to accomplish the [2Fe-2S] cluster assembly. Finally, the [2Fe-2S] cluster is transferred from ISCU to chaperone proteins, including HSCB, HSPA9 and GLRX5. Functionally, may catalyze the desulfuration of L-cysteine to L-alanine as component of the cysteine desulfurase complex (NFS1:LYRM4), leading to the formation of a cysteine persulfide intermediate. Acts as a sulfur donor for MOCS3 by transferring the sulfur of the cysteine persulfide intermediate on MOCS3. In Pongo abelii (Sumatran orangutan), this protein is Cysteine desulfurase.